The primary structure comprises 338 residues: 3-keto-steroid reductase erg27 (338 aa).

L16, T44, K50, and D75 together coordinate NADP(+). Active-site proton donor residues include S180 and Y203. 3 residues coordinate NADP(+): Y203, K207, and T236. Residue K207 is the Lowers pKa of active site Tyr of the active site.

It belongs to the short-chain dehydrogenases/reductases (SDR) family. ERG27 subfamily. As to quaternary structure, heterotetramer of erg25, erg26, erg27 and erg28. Erg28 acts as a scaffold to tether erg27 and other 4,4-demethylation-related enzymes, forming a demethylation enzyme complex, in the endoplasmic reticulum.

It carries out the reaction 3-dehydro-4alpha-methylzymosterol + NADPH + H(+) = 4alpha-methylzymosterol + NADP(+). The protein operates within steroid biosynthesis; zymosterol biosynthesis; zymosterol from lanosterol: step 5/6. It functions in the pathway steroid metabolism; ergosterol biosynthesis. Functionally, 3-keto-steroid reductase; part of the third module of ergosterol biosynthesis pathway that includes by the late steps of the pathway. Erg27 is a catalytic component of the C-4 demethylation complex that catalyze the reduction of the keto group on the C-3. The third module or late pathway involves the ergosterol synthesis itself through consecutive reactions that mainly occur in the endoplasmic reticulum (ER) membrane. Firstly, the squalene synthase erg9 catalyzes the condensation of 2 farnesyl pyrophosphate moieties to form squalene, which is the precursor of all steroids. Secondly, squalene is converted into lanosterol by the consecutive action of the squalene epoxidase erg1 and the lanosterol synthase erg7. The lanosterol 14-alpha-demethylase erg11/cyp1 catalyzes C14-demethylation of lanosterol to produce 4,4'-dimethyl cholesta-8,14,24-triene-3-beta-ol. In the next steps, a complex process involving various demethylation, reduction and desaturation reactions catalyzed by the C-14 reductase erg24 and the C-4 demethylation complex erg25-erg26-erg27 leads to the production of zymosterol. Erg28 likely functions in the C-4 demethylation complex reaction by tethering erg26 and Erg27 to the endoplasmic reticulum or to facilitate interaction between these proteins. Then, the sterol 24-C-methyltransferase erg6 catalyzes the methyl transfer from S-adenosyl-methionine to the C-24 of zymosterol to form fecosterol. The C-8 sterol isomerase erg2 catalyzes the reaction which results in unsaturation at C-7 in the B ring of sterols and thus converts fecosterol to episterol. The sterol-C5-desaturases erg31 and erg32 then catalyze the introduction of a C-5 double bond in the B ring to produce 5-dehydroepisterol. The C-22 sterol desaturase erg5 further converts 5-dehydroepisterol into ergosta-5,7,22,24(28)-tetraen-3beta-ol by forming the C-22(23) double bond in the sterol side chain. Finally, ergosta-5,7,22,24(28)-tetraen-3beta-ol is substrate of the C-24(28) sterol reductase erg4 to produce ergosterol. In the genus Schizosaccharomyces, a second route exists between lanosterol and fecosterol, via the methylation of lanosterol to eburicol by erg6, followed by C14-demethylation by erg11/cyp1 and C4-demethylation by the demethylation complex erg25-erg26-erg27. The chain is 3-keto-steroid reductase erg27 from Schizosaccharomyces pombe (strain 972 / ATCC 24843) (Fission yeast).